The chain runs to 513 residues: ATP synthase subunit alpha (513 aa).

ATP is bound at residue 169–176 (GDRQTGKT).

The protein belongs to the ATPase alpha/beta chains family. As to quaternary structure, F-type ATPases have 2 components, CF(1) - the catalytic core - and CF(0) - the membrane proton channel. CF(1) has five subunits: alpha(3), beta(3), gamma(1), delta(1), epsilon(1). CF(0) has three main subunits: a(1), b(2) and c(9-12). The alpha and beta chains form an alternating ring which encloses part of the gamma chain. CF(1) is attached to CF(0) by a central stalk formed by the gamma and epsilon chains, while a peripheral stalk is formed by the delta and b chains.

It localises to the cell inner membrane. It catalyses the reaction ATP + H2O + 4 H(+)(in) = ADP + phosphate + 5 H(+)(out). In terms of biological role, produces ATP from ADP in the presence of a proton gradient across the membrane. The alpha chain is a regulatory subunit. The polypeptide is ATP synthase subunit alpha (Ruthia magnifica subsp. Calyptogena magnifica).